Consider the following 115-residue polypeptide: uncharacterized protein (115 aa).

This is an uncharacterized protein from Spirochaeta aurantia.